Reading from the N-terminus, the 113-residue chain is MSYRRLGLRSDHRRSVLRNSVTSLLKEEKISTTETRAKEIKRLTEKMITLGKRGDLHARRQAAAYIMSDEVVQKLFSDIAARYEERNGGYTRLVKTGYRKGDGAPMVMIELVE.

It belongs to the bacterial ribosomal protein bL17 family. Part of the 50S ribosomal subunit. Contacts protein L32.

The chain is Large ribosomal subunit protein bL17 from Syntrophomonas wolfei subsp. wolfei (strain DSM 2245B / Goettingen).